The following is a 414-amino-acid chain: MKQYKILLIIADGLGDRPVSKLNGLTPLEAANKPAISDLLKSSMIGLMDPISPGVIPGSDTSHLSIFGLDPHVYYRGRGAFEALGAGATLKHGDVAFRGNFATVNNDLVVVDRRAGRKLEEGEELVKELNEKIKEINDVKIRFYKGTEHRVAVVLSGKGISDKVSDTDPHYEGLKVLESKPLEDSTEALRTAEIINILTRKVFDVLNSSEVNKRRIEQGEKPANIVLLRGAAHYVKLPSFSSYTKLKAAAVSATALIKGICRELGMNVVTPVGATGGIDTNYNAKAKAAIELLKENDFVFLHIKATDAASHDGLVEEKVKAIERIDKVIGTIVDNVGRDNLILMFTGDHATPVEVKEHSGDPVPILLYVPYPIINDNVKDFNEKEARKGSLRIRGLDVTNILLNYSNRAEKYGA.

It belongs to the BPG-independent phosphoglycerate mutase family. A-PGAM subfamily.

The catalysed reaction is (2R)-2-phosphoglycerate = (2R)-3-phosphoglycerate. It functions in the pathway carbohydrate degradation; glycolysis; pyruvate from D-glyceraldehyde 3-phosphate: step 3/5. Its function is as follows. Catalyzes the interconversion of 2-phosphoglycerate and 3-phosphoglycerate. The sequence is that of 2,3-bisphosphoglycerate-independent phosphoglycerate mutase from Saccharolobus islandicus (strain M.14.25 / Kamchatka #1) (Sulfolobus islandicus).